The primary structure comprises 258 residues: Acyl-[acyl-carrier-protein]--UDP-N-acetylglucosamine O-acyltransferase (258 aa).

The protein belongs to the transferase hexapeptide repeat family. LpxA subfamily. Homotrimer.

It is found in the cytoplasm. It carries out the reaction a (3R)-hydroxyacyl-[ACP] + UDP-N-acetyl-alpha-D-glucosamine = a UDP-3-O-[(3R)-3-hydroxyacyl]-N-acetyl-alpha-D-glucosamine + holo-[ACP]. It participates in glycolipid biosynthesis; lipid IV(A) biosynthesis; lipid IV(A) from (3R)-3-hydroxytetradecanoyl-[acyl-carrier-protein] and UDP-N-acetyl-alpha-D-glucosamine: step 1/6. Its function is as follows. Involved in the biosynthesis of lipid A, a phosphorylated glycolipid that anchors the lipopolysaccharide to the outer membrane of the cell. This is Acyl-[acyl-carrier-protein]--UDP-N-acetylglucosamine O-acyltransferase from Saccharophagus degradans (strain 2-40 / ATCC 43961 / DSM 17024).